The following is a 1860-amino-acid chain: Proprotein convertase subtilisin/kexin type 5 (1860 aa).

The first 32 residues, 1–32 (MGWGSRCCCPGRLDLLCVLALLGGCLLPVCRT), serve as a signal peptide directing secretion. The propeptide occupies 33–114 (RVYTNHWAVK…QQVVKKRTKR (82 aa)). Residues 115–1743 (DYDFSRAQST…VRPATEHFKT (1629 aa)) lie on the Extracellular side of the membrane. Positions 134–453 (MWYMHCSDNT…FGLMDAEAMV (320 aa)) constitute a Peptidase S8 domain. Active-site charge relay system residues include aspartate 171 and histidine 212. N-linked (GlcNAc...) asparagine glycans are attached at residues asparagine 225 and asparagine 381. The Charge relay system role is filled by serine 386. Positions 461 to 601 (TVPRQHVCVE…SLVLYGTSVQ (141 aa)) constitute a P/Homo B domain. A Cell attachment site motif is present at residues 519–521 (RGD). FU repeat units follow at residues 630-680 (EDYA…GHYH), 683-730 (KKRC…GSYQ), 734-777 (KNLC…GRYF), 779-824 (GQDC…SYYF), 832-879 (YKSC…GEYV), 882-927 (HGHC…WKFE), 929-979 (ENQC…GHYA), 982-1028 (GNTC…GEVQ), 1032-1077 (YEEC…KTYS), 1079-1121 (EVEC…GFYG), 1125-1168 (MGEC…KTQE), 1177-1221 (LRKL…GTWP), 1225-1272 (SGSC…GSYA), 1274-1318 (DGIC…RHVA), 1320-1363 (KGVC…GFYA), 1365-1411 (SRHC…GTYY), 1415-1461 (TKEC…SEYW), 1465-1510 (APGC…GYYA), 1514-1559 (SNRC…GYYA), 1563-1610 (TGRC…HYYV), 1614-1659 (TQTC…GEYR), and 1665-1712 (KFNC…SDPP). Residues 636–1727 (CDPECSEVGC…CDCQDTTDEC (1092 aa)) form a CRM (Cys-rich motif) region. Asparagine 665 carries N-linked (GlcNAc...) asparagine glycosylation. Asparagine 752, asparagine 802, and asparagine 852 each carry an N-linked (GlcNAc...) asparagine glycan. Positions 869–913 (MGAICKDGEYVDEHGHCQTCEASCAKCQGPTQEDCTTCPMTRIFD) constitute a PLAC domain. N-linked (GlcNAc...) asparagine glycosylation occurs at asparagine 1014. The N-linked (GlcNAc...) asparagine glycan is linked to asparagine 1191. An N-linked (GlcNAc...) asparagine glycan is attached at asparagine 1290. Asparagine 1497 carries N-linked (GlcNAc...) asparagine glycosylation. N-linked (GlcNAc...) asparagine glycosylation is found at asparagine 1685 and asparagine 1707. A helical transmembrane segment spans residues 1744-1764 (ALFITSSMMLVLLLGAAVVVW). The Cytoplasmic portion of the chain corresponds to 1765 to 1860 (KKSRGRVQPA…YDDESYSYYQ (96 aa)). AC stretches follow at residues 1807 to 1826 (VIEY…IVYM) and 1838 to 1860 (YGLL…SYYQ).

This sequence belongs to the peptidase S8 family. In terms of tissue distribution, expressed in T-lymphocytes.

The protein resides in the secreted. Its subcellular location is the endomembrane system. Serine endoprotease that processes various proproteins by cleavage at paired basic amino acids, recognizing the RXXX[KR]R consensus motif. Likely functions in the constitutive and regulated secretory pathways. Plays an essential role in pregnancy establishment by proteolytic activation of a number of important factors such as BMP2, CALD1 and alpha-integrins. In Homo sapiens (Human), this protein is Proprotein convertase subtilisin/kexin type 5 (PCSK5).